The chain runs to 566 residues: Bifunctional NADP phosphatase/NAD kinase (566 aa).

The segment at 1–283 is NADP phosphatase; that stretch reads MDMLEMALNI…KLVGIFGNRW (283 aa). Mg(2+) is bound by residues E66, D85, V87, D88, and D229. The interval 275–566 is NAD kinase; the sequence is LVGIFGNRWR…YNKLKKLSLM (292 aa). The Proton acceptor role is filled by D355. Residues 355–356, R360, 430–431, K441, R458, D460, 471–476, and N528 each bind NAD(+); these read DG, NE, and TAYSLS.

In the N-terminal section; belongs to the inositol monophosphatase superfamily. This sequence in the C-terminal section; belongs to the NAD kinase family. In terms of assembly, homotetramer. The cofactor is Mg(2+).

It is found in the cytoplasm. It carries out the reaction NAD(+) + ATP = ADP + NADP(+) + H(+). The enzyme catalyses NADP(+) + H2O = phosphate + NAD(+). Functionally, involved in the regulation of the intracellular balance between NAD(H) and NADP(H), and is a key enzyme in the biosynthesis of NADP. Catalyzes the phosphorylation and dephosphorylation of NAD and NADP, respectively. Although it shows conflicting dual activities and is able to supply NADP, it seems that its physiological role is to prevent excess accumulation of NADP. The sequence is that of Bifunctional NADP phosphatase/NAD kinase from Methanococcus maripaludis (strain DSM 14266 / JCM 13030 / NBRC 101832 / S2 / LL).